We begin with the raw amino-acid sequence, 509 residues long: Ethanolamine-phosphate phospho-lyase (509 aa).

N6-(pyridoxal phosphate)lysine is present on K279. Residues 451-474 are compositionally biased toward basic and acidic residues; that stretch reads EKTSAKRKVHNENSGDTNAKEKET. Positions 451–509 are disordered; sequence EKTSAKRKVHNENSGDTNAKEKETCSSNSQERNPNDHAYRQSNGLHPESPTFTRKRIRT.

This sequence belongs to the class-III pyridoxal-phosphate-dependent aminotransferase family. In terms of assembly, homotetramer. The cofactor is pyridoxal 5'-phosphate.

It is found in the mitochondrion. The catalysed reaction is phosphoethanolamine + H2O = acetaldehyde + NH4(+) + phosphate. Functionally, catalyzes the pyridoxal-phosphate-dependent breakdown of phosphoethanolamine, converting it to ammonia, inorganic phosphate and acetaldehyde. The polypeptide is Ethanolamine-phosphate phospho-lyase (etnppl) (Xenopus laevis (African clawed frog)).